A 464-amino-acid polypeptide reads, in one-letter code: ATP synthase subunit beta (464 aa).

153–160 (GGAGVGKT) is an ATP binding site.

It belongs to the ATPase alpha/beta chains family. F-type ATPases have 2 components, CF(1) - the catalytic core - and CF(0) - the membrane proton channel. CF(1) has five subunits: alpha(3), beta(3), gamma(1), delta(1), epsilon(1). CF(0) has three main subunits: a(1), b(2) and c(9-12). The alpha and beta chains form an alternating ring which encloses part of the gamma chain. CF(1) is attached to CF(0) by a central stalk formed by the gamma and epsilon chains, while a peripheral stalk is formed by the delta and b chains.

It is found in the cell inner membrane. The catalysed reaction is ATP + H2O + 4 H(+)(in) = ADP + phosphate + 5 H(+)(out). In terms of biological role, produces ATP from ADP in the presence of a proton gradient across the membrane. The catalytic sites are hosted primarily by the beta subunits. The polypeptide is ATP synthase subunit beta (Burkholderia ambifaria (strain ATCC BAA-244 / DSM 16087 / CCUG 44356 / LMG 19182 / AMMD) (Burkholderia cepacia (strain AMMD))).